A 510-amino-acid chain; its full sequence is 2,3-bisphosphoglycerate-independent phosphoglycerate mutase (510 aa).

Residues Asp14 and Ser64 each contribute to the Mn(2+) site. Ser64 acts as the Phosphoserine intermediate in catalysis. Substrate-binding positions include His125, 155–156, Arg187, Arg193, 259–262, and Lys332; these read RD and RADR. Mn(2+) is bound by residues Asp399, His403, Asp440, His441, and His459.

Belongs to the BPG-independent phosphoglycerate mutase family. Monomer. Requires Mn(2+) as cofactor.

It catalyses the reaction (2R)-2-phosphoglycerate = (2R)-3-phosphoglycerate. The protein operates within carbohydrate degradation; glycolysis; pyruvate from D-glyceraldehyde 3-phosphate: step 3/5. Its function is as follows. Catalyzes the interconversion of 2-phosphoglycerate and 3-phosphoglycerate. The sequence is that of 2,3-bisphosphoglycerate-independent phosphoglycerate mutase from Pseudomonas savastanoi pv. phaseolicola (strain 1448A / Race 6) (Pseudomonas syringae pv. phaseolicola (strain 1448A / Race 6)).